The primary structure comprises 766 residues: Pyrophosphate-energized vacuolar membrane proton pump (766 aa).

Over 2-8 the chain is Intravacuolar; it reads GAAILPD. The chain crosses the membrane as a helical span at residues 9 to 35; it reads LGTEILIPVCAVIGIAFALFQWLLVSK. Residues 36 to 84 lie on the Cytoplasmic side of the membrane; the sequence is VKLSAVRDASPNAAAKNGYNDYLIEEEEGINDHNVVVKCAEIQNAISEG. A helical transmembrane segment spans residues 85 to 114; sequence ATSFLFTEYKYVGIFMVAFAILIFLFLGSV. The Intravacuolar segment spans residues 115–135; that stretch reads EGFSTSPQACSYDKTKTCKPA. A disulfide bridge links cysteine 124 with cysteine 132. The helical transmembrane segment at 136-163 threads the bilayer; that stretch reads LATAIFSTVSFLLGGVTSLVSGFLGMKI. The Cytoplasmic segment spans residues 164–186; sequence ATYANARTTLEARKGVGKAFITA. Residues 187–216 form a helical membrane-spanning segment; that stretch reads FRSGAVMGFLLAANGLLVLYIAINLFKIYY. Residues 217–219 are Intravacuolar-facing; the sequence is GDD. Residues 220–248 traverse the membrane as a helical segment; that stretch reads WGGLFEAITGYGLGGSSMALFGRVGGGIY. Residues 249–286 lie on the Cytoplasmic side of the membrane; that stretch reads TKAADVGADLVGKVERNIPEDDPRNPAVIADNVGDNVG. Lysine 250 serves as a coordination point for substrate. Mg(2+) is bound by residues aspartate 253, aspartate 257, and aspartate 283. The helical transmembrane segment at 287 to 312 threads the bilayer; sequence DIAGMGSDLFGSYAESSCAALVVASI. The Intravacuolar portion of the chain corresponds to 313 to 320; that stretch reads SSFGLNHE. Residues 321–346 form a helical membrane-spanning segment; that stretch reads LTAMLYPLIVSSVGILVCLLTTLFAT. The Cytoplasmic segment spans residues 347–354; the sequence is DFFEIKAV. A helical transmembrane segment spans residues 355-382; sequence KEIEPALKKQLVISTVLMTIGVAVVSFV. Topologically, residues 383–401 are intravacuolar; sequence ALPTSFTIFNFGVQKDVKS. The helical transmembrane segment at 402–425 threads the bilayer; the sequence is WQLFLCVAVGLWAGLIIGFVTEYY. Residues 426–447 lie on the Cytoplasmic side of the membrane; sequence TSNAYSPVQDVADSCRTGAATN. Residues 448-472 form a helical membrane-spanning segment; sequence VIFGLALGYKSVIIPIFAIAISIFV. Topologically, residues 473 to 478 are intravacuolar; sequence SFTFAA. The helical transmembrane segment at 479–505 threads the bilayer; the sequence is MYGIAVAALGMLSTIATGLAIDAYGPI. Over 506-534 the chain is Cytoplasmic; that stretch reads SDNAGGIAEMAGMSHRIRERTDALDAAGN. Residues aspartate 507 and asparagine 534 each contribute to the Mg(2+) site. The helical transmembrane segment at 535–563 threads the bilayer; sequence TTAAIGKGFAIGSAALVSLALFGAFVSRA. Residues 564–573 are Intravacuolar-facing; sequence SITTVDVLTP. The chain crosses the membrane as a helical span at residues 574-602; sequence KVFIGLIVGAMLPYWFSAMTMKSVGSAAL. The Cytoplasmic portion of the chain corresponds to 603-631; sequence KMVEEVRRQFNTIPGLMEGTAKPDYATCV. Residues 632-660 traverse the membrane as a helical segment; sequence KISTDASIKEMIPPGALVMLTPLVVGILF. Glycine 661 is a topological domain (intravacuolar). The chain crosses the membrane as a helical span at residues 662 to 689; the sequence is VETLSGVLAGSLVSGVQIAISASNTGGA. The Cytoplasmic segment spans residues 690–732; that stretch reads WDNAKKYIEAGASEHARSLGPKGSDCHKAAVIGDTIGDPLKDT. Mg(2+) is bound by residues aspartate 691 and aspartate 727. Lysine 730 serves as a coordination point for substrate. The chain crosses the membrane as a helical span at residues 733–758; it reads SGPSLNILIKLMAVESLVFAPFFATH. Topologically, residues 759-765 are intravacuolar; sequence GGLLFKI.

This sequence belongs to the H(+)-translocating pyrophosphatase (TC 3.A.10) family. K(+)-stimulated subfamily. As to quaternary structure, homodimer.

The protein localises to the vacuole membrane. It catalyses the reaction diphosphate + H2O + H(+)(in) = 2 phosphate + 2 H(+)(out). With respect to regulation, inhibited by excess pyrophosphate as well as excess Mg(2+). Inhibition by ATP, GTP, and CTP is reversed by increasing the Mg(2+) concentration. This suggests that the substrate is a particular metal complex such as MgPPi(2-). Modification of Asp-283 with DCCD abolishes pyrophosphatase activity. Functionally, proton-translocating inorganic pyrophosphatase that contributes to the transtonoplast (from cytosol to vacuole lumen) H(+)-electrochemical potential difference. It establishes a proton gradient of similar and often greater magnitude than the H(+)-ATPase on the same membrane. The sequence is that of Pyrophosphate-energized vacuolar membrane proton pump from Vigna radiata var. radiata (Mung bean).